The primary structure comprises 382 residues: MVKLFSFLLLVWVASPAFSSEFLKASGSNFYYGGQKVFLSGVNFAWRSYGSDFGNGQYASNGPALKDWINKVKASGGNTARVWVHVEGQVSPAFDSHGFVTSTDSKKTLINDLSDLLDYANGQNVFLILVLFNGALQNNSNVQNLFWDESKLNSYINNALTPMVNALKSKPSLAAWEVLNEPEGTLQPGSDQNSCYDTSTLAAQGAGWGGKKFPMKQILKTINWISSAIHNADSKALVTVGSWSELTQTDSFGYRNHYKDSCLTGAGGKSNGIINFYQMHTYSHSGKWNQNAPFKVNRWAYNVNDKPLLIGEFASVCSQNEGIQNLYKYAYNNGYNGALTWQFNSGGDCSDTYSNQMYGMQALKGQNDQSGGKGGMVSVNIN.

A signal peptide spans Met-1–Ser-19. Substrate-binding positions include Trp-83, Asn-144, Trp-147–Lys-151, and Asn-180. Glu-181 acts as the Proton donor/acceptor in catalysis. Positions 187, 204, 208, 243, 282, and 284 each coordinate substrate. Cys-195 and Cys-262 are disulfide-bonded. Glu-312 functions as the Nucleophile in the catalytic mechanism. A disulfide bond links Cys-317 and Cys-349. 2 residues coordinate substrate: Trp-341 and Asp-348. Residues Gly-346 to Ser-350 form an involved in stabilization of the transition state region.

It belongs to the glycosyl hydrolase 5 (cellulase A) family. Monomer.

The protein resides in the secreted. The catalysed reaction is Random hydrolysis of (1-&gt;4)-beta-D-mannosidic linkages in mannans, galactomannans and glucomannans.. Its activity is regulated as follows. Activated particularly by Ca(2+) and Zn(2+), and to a lesser extent by Na(+), K(+), Mg(2+) and Cu(2+). Activation effect of the divalent metal ions Ca(2+), Zn(2+), Mg(2+) and Cu(2+) is reduced significantly by the addition of EDTA. Strongly inhibited by Mn(2+), Hg(2+) and Ag(+). Its function is as follows. Hydrolyzes 1,4-beta linked polysaccharide backbones of mannans. Has high activity toward locust bean gum. Also active toward konjac and beta-1,4-mannan. Hydrolyzes mannotetraose (M4) and mannopentaose (M5) to mannobiose (M2) and mannotriose (M3) with a little production of mannose (M1). Hydrolyzes beta-1,4-mannan to M2, M3 and M4. Hardly hydrolyzes M2 and M3. Does not hydrolyze p-nitrophenyl-beta-D-mannopyranoside, gua-gum, carboxymethyl cellulose, soluble starch or laminarin. The polypeptide is Mannan endo-1,4-beta-mannosidase (Cryptopygus antarcticus (Antarctic springtail)).